The primary structure comprises 128 residues: Small ribosomal subunit protein uS13 (128 aa).

Positions 97 to 128 (PVRGQRTRSNARTRKGPRPSRIKTKKKKEQTV) are disordered. Over residues 101-128 (QRTRSNARTRKGPRPSRIKTKKKKEQTV) the composition is skewed to basic residues.

The protein belongs to the universal ribosomal protein uS13 family. In terms of assembly, part of the 30S ribosomal subunit. Forms a loose heterodimer with protein S19. Forms two bridges to the 50S subunit in the 70S ribosome.

Functionally, located at the top of the head of the 30S subunit, it contacts several helices of the 16S rRNA. In the 70S ribosome it contacts the 23S rRNA (bridge B1a) and protein L5 of the 50S subunit (bridge B1b), connecting the 2 subunits; these bridges are implicated in subunit movement. Contacts the tRNAs in the A and P-sites. The protein is Small ribosomal subunit protein uS13 of Pseudothermotoga lettingae (strain ATCC BAA-301 / DSM 14385 / NBRC 107922 / TMO) (Thermotoga lettingae).